A 332-amino-acid chain; its full sequence is NADH-quinone oxidoreductase subunit H (332 aa).

Transmembrane regions (helical) follow at residues 11–31 (TYKILFLLVPVLVSVAMIVWL), 77–97 (VIFILAPIVTMTLALVSWAVI), 110–130 (VGVLYLFAVSSLGVYGIIMGG), 156–176 (IGVIIINVLLCVGSLNLNDII), 182–202 (LWFIIPLFPMFVIFFISALAE), 240–260 (NILLMCAMGSILFLGGWLSPI), 268–288 (IPGAIWMIFKILFLFVLFALV), and 307–327 (IFLPLSLTWVVLTASYLFYFN).

Belongs to the complex I subunit 1 family. As to quaternary structure, NDH-1 is composed of 14 different subunits. Subunits NuoA, H, J, K, L, M, N constitute the membrane sector of the complex.

It localises to the cell inner membrane. It catalyses the reaction a quinone + NADH + 5 H(+)(in) = a quinol + NAD(+) + 4 H(+)(out). Functionally, NDH-1 shuttles electrons from NADH, via FMN and iron-sulfur (Fe-S) centers, to quinones in the respiratory chain. The immediate electron acceptor for the enzyme in this species is believed to be ubiquinone. Couples the redox reaction to proton translocation (for every two electrons transferred, four hydrogen ions are translocated across the cytoplasmic membrane), and thus conserves the redox energy in a proton gradient. This subunit may bind ubiquinone. In Pelagibacter ubique (strain HTCC1062), this protein is NADH-quinone oxidoreductase subunit H.